A 152-amino-acid chain; its full sequence is Superoxide dismutase [Cu-Zn] (152 aa).

Cu cation is bound by residues H45, H47, and H62. Residues 61-87 (PHFNPAGKEHGAPEDENRHAGDLGNAT) are disordered. 4 residues coordinate Zn(2+): H62, H70, H79, and D82. Over residues 67 to 81 (GKEHGAPEDENRHAG) the composition is skewed to basic and acidic residues. H119 contacts Cu cation.

Belongs to the Cu-Zn superoxide dismutase family. Homodimer. Requires Cu cation as cofactor. The cofactor is Zn(2+).

The protein localises to the cytoplasm. It catalyses the reaction 2 superoxide + 2 H(+) = H2O2 + O2. In terms of biological role, destroys radicals which are normally produced within the cells and which are toxic to biological systems. The sequence is that of Superoxide dismutase [Cu-Zn] from Zingiber officinale (Ginger).